The following is an 863-amino-acid chain: Aminopeptidase N (863 aa).

Residues glutamate 124 and 263–267 (GAMEN) each bind substrate. Position 299 (histidine 299) interacts with Zn(2+). The active-site Proton acceptor is the glutamate 300. Residues histidine 303 and glutamate 322 each coordinate Zn(2+).

It belongs to the peptidase M1 family. Zn(2+) is required as a cofactor.

It carries out the reaction Release of an N-terminal amino acid, Xaa-|-Yaa- from a peptide, amide or arylamide. Xaa is preferably Ala, but may be most amino acids including Pro (slow action). When a terminal hydrophobic residue is followed by a prolyl residue, the two may be released as an intact Xaa-Pro dipeptide.. Its function is as follows. Aminopeptidase N is involved in the degradation of intracellular peptides generated by protein breakdown during normal growth as well as in response to nutrient starvation. This chain is Aminopeptidase N (pepN), found in Caulobacter vibrioides (strain ATCC 19089 / CIP 103742 / CB 15) (Caulobacter crescentus).